Consider the following 330-residue polypeptide: Polyprenyl transferase dpfgC (330 aa).

Asn-34 is a glycosylation site (N-linked (GlcNAc...) asparagine). 7 consecutive transmembrane segments (helical) span residues 105–125 (ALCVLAAYLFCGAGMVWNDWI), 146–166 (VTTTEAMVWMTLQVIMSWGVL), 175–192 (VLKHLIPVMVASVLYPFG), 199–219 (KLMIYPQYILAFTIAWPAIPG), 237–257 (CLPLCIMVFFWTIYLNTAYSY), 273–293 (NIAGNHIHVLLVLLVSPIILA), and 310–330 (NFILGVWTILACAAEVFLTSA).

It belongs to the UbiA prenyltransferase family. It depends on Mg(2+) as a cofactor.

It is found in the membrane. It participates in secondary metabolite biosynthesis; terpenoid biosynthesis. Functionally, polyprenyl transferase; part of the gene cluster that mediates the biosynthesis of diterpenoid pyrones. The first step of the pathway is the synthesis of the alpha-pyrone moiety by the polyketide synthase dpfgA via condensation of one acetyl-CoA starter unit with 3 malonyl-CoA units and 2 methylations. The alpha-pyrone is then combined with geranylgeranyl pyrophosphate (GGPP) formed by the GGPP synthase dpfgD through the action of the prenyltransferase dpfgC to yield a linear alpha-pyrone diterpenoid. Subsequent steps in the diterpenoid pyrone biosynthetic pathway involve the decalin core formation, which is initiated by the epoxidation of the C10-C11 olefin by the FAD-dependent oxidoreductase dpfgE, and is followed by a cyclization cascade catalyzed by the terpene cyclase dpfgB. The short chain dehydrogenase/reductase dpfgG then oxidizes the 8S hydroxy group to a ketone and the short chain dehydrogenase/reductase dpfgH reduces the ketone to the 8R hydroxy group to yield higginsianin B. Higginsianin B is further methylated by the methyltransferase dpfgI to produce the intermediate named FDDP B. The cytochrome P450 monooxygenase dfgpJ then catalyzes a three-step oxidation at C-27 to generate a carboxylic acid as well as C-26 hydroxylation. Finally, methyltransferase dpfgK methylates the carboxylic acid generated by dpfgJ, yielding the final diterpenoid pyrones from the pathway which were named FDDP D and FDDP E. The polypeptide is Polyprenyl transferase dpfgC (Gibberella zeae (strain ATCC MYA-4620 / CBS 123657 / FGSC 9075 / NRRL 31084 / PH-1) (Wheat head blight fungus)).